A 60-amino-acid polypeptide reads, in one-letter code: Large ribosomal subunit protein bL32 (60 aa).

This sequence belongs to the bacterial ribosomal protein bL32 family.

This Borrelia duttonii (strain Ly) protein is Large ribosomal subunit protein bL32.